A 129-amino-acid chain; its full sequence is MDPESRRLFNVRKVQKGKKPQFKRTCSHKFKRLDDNWRRPRGSQGKQRRKYVSKGALVQVGYGSPAAVKGLHPSGYSDVLISSIAELELVDPSYEAIRIAGTIGAQKKALILAKAEEAGIKVLNSGRSE.

Belongs to the eukaryotic ribosomal protein eL32 family.

In Methanosarcina acetivorans (strain ATCC 35395 / DSM 2834 / JCM 12185 / C2A), this protein is Large ribosomal subunit protein eL32 (rpl32e).